We begin with the raw amino-acid sequence, 440 residues long: Chromosomal replication initiator protein DnaA (440 aa).

Residues 1-69 (MKERILQEIK…VKVVLGNDAT (69 aa)) form a domain I, interacts with DnaA modulators region. Positions 69–96 (TFEITYEAFEPHSSYSEPLVKKRAVLLT) are domain II. The interval 97–313 (PLNPDYTFEN…GAIIKLLVYK (217 aa)) is domain III, AAA+ region. ATP is bound by residues Gly-140, Gly-142, Lys-143, and Thr-144. Residues 314–440 (ETTGKEVDLR…GEISKRALSG (127 aa)) are domain IV, binds dsDNA.

This sequence belongs to the DnaA family. In terms of assembly, oligomerizes as a right-handed, spiral filament on DNA at oriC.

It localises to the cytoplasm. In terms of biological role, plays an essential role in the initiation and regulation of chromosomal replication. ATP-DnaA binds to the origin of replication (oriC) to initiate formation of the DNA replication initiation complex once per cell cycle. Binds the DnaA box (a 9 base pair repeat at the origin) and separates the double-stranded (ds)DNA. Forms a right-handed helical filament on oriC DNA; dsDNA binds to the exterior of the filament while single-stranded (ss)DNA is stabiized in the filament's interior. The ATP-DnaA-oriC complex binds and stabilizes one strand of the AT-rich DNA unwinding element (DUE), permitting loading of DNA polymerase. After initiation quickly degrades to an ADP-DnaA complex that is not apt for DNA replication. Binds acidic phospholipids. The chain is Chromosomal replication initiator protein DnaA from Thermotoga petrophila (strain ATCC BAA-488 / DSM 13995 / JCM 10881 / RKU-1).